Here is a 375-residue protein sequence, read N- to C-terminus: Histidine biosynthesis bifunctional protein HisB (375 aa).

The histidinol-phosphatase stretch occupies residues 1-168 (MTPILFVDRD…GIAHELADAP (168 aa)). The active-site Nucleophile is the Asp-8. Asp-8, Asp-10, and Asp-128 together coordinate Mg(2+). The active-site Proton donor is the Asp-10. Residues 169–375 (RRAVVQRNTK…TALPSTKGAL (207 aa)) form an imidazoleglycerol-phosphate dehydratase region.

In the N-terminal section; belongs to the histidinol-phosphatase family. This sequence in the C-terminal section; belongs to the imidazoleglycerol-phosphate dehydratase family. The cofactor is Mg(2+).

It localises to the cytoplasm. The enzyme catalyses D-erythro-1-(imidazol-4-yl)glycerol 3-phosphate = 3-(imidazol-4-yl)-2-oxopropyl phosphate + H2O. It carries out the reaction L-histidinol phosphate + H2O = L-histidinol + phosphate. It functions in the pathway amino-acid biosynthesis; L-histidine biosynthesis; L-histidine from 5-phospho-alpha-D-ribose 1-diphosphate: step 6/9. Its pathway is amino-acid biosynthesis; L-histidine biosynthesis; L-histidine from 5-phospho-alpha-D-ribose 1-diphosphate: step 8/9. The chain is Histidine biosynthesis bifunctional protein HisB from Xanthomonas campestris pv. campestris (strain B100).